The chain runs to 569 residues: Urease subunit alpha (569 aa).

The 438-residue stretch at 132–569 (GGVDTHIHFI…VPLGQRYFLF (438 aa)) folds into the Urease domain. Residues histidine 137, histidine 139, and lysine 220 each coordinate Ni(2+). Lysine 220 bears the N6-carboxylysine mark. Position 222 (histidine 222) interacts with substrate. Ni(2+)-binding residues include histidine 249 and histidine 275. The Proton donor role is filled by histidine 323. Aspartate 363 is a binding site for Ni(2+).

Belongs to the metallo-dependent hydrolases superfamily. Urease alpha subunit family. Heterotrimer of UreA (gamma), UreB (beta) and UreC (alpha) subunits. Three heterotrimers associate to form the active enzyme. The cofactor is Ni cation. In terms of processing, carboxylation allows a single lysine to coordinate two nickel ions.

The protein resides in the cytoplasm. The enzyme catalyses urea + 2 H2O + H(+) = hydrogencarbonate + 2 NH4(+). It participates in nitrogen metabolism; urea degradation; CO(2) and NH(3) from urea (urease route): step 1/1. This Bacillus subtilis (strain 168) protein is Urease subunit alpha.